The sequence spans 109 residues: UPF0102 protein Suden_1901 (109 aa).

The protein belongs to the UPF0102 family.

This chain is UPF0102 protein Suden_1901, found in Sulfurimonas denitrificans (strain ATCC 33889 / DSM 1251) (Thiomicrospira denitrificans (strain ATCC 33889 / DSM 1251)).